Reading from the N-terminus, the 298-residue chain is Elongation factor Ts (298 aa).

The segment at 79–82 (TDFV) is involved in Mg(2+) ion dislocation from EF-Tu.

It belongs to the EF-Ts family.

It localises to the cytoplasm. Associates with the EF-Tu.GDP complex and induces the exchange of GDP to GTP. It remains bound to the aminoacyl-tRNA.EF-Tu.GTP complex up to the GTP hydrolysis stage on the ribosome. This Mycoplasma genitalium (strain ATCC 33530 / DSM 19775 / NCTC 10195 / G37) (Mycoplasmoides genitalium) protein is Elongation factor Ts (tsf).